Reading from the N-terminus, the 408-residue chain is MSAPASSAPRLRLRVSKAAELHIRDGHPWVYESSVREQNREGEPGELAVVYDRRDRFLAIGLYDPFSPLRLRVLHTGMPTQLDDAWWAARLDAALARRAALFGPLTAFGDTDGYRVLNGESDGFPGLVVDRYAGVLVMKLYTAAWFPHLRRMLELFAARAPDFAVVLRLSRNIAERAADLGLHDGQVIYGELAGDSVVFRESGLRFEAEVRQGQKTGFFLDQRENRRRVEGLSEGRRVLNAFSFSGGFSLYAARGGASEVTSLDISAHALRSAERNFALNPELSAVHKTVQADVFEWLPAGKGSGADYDLVILDPPSLARREAEREGAIRAYGKLAEGGLTRLAPGGILVSASCSAHVSAEEFEEAVMSAVRRSGRRWRKLLSSRHAPDHHASFAEAEYLKAVFLQMD.

The protein belongs to the methyltransferase superfamily.

The enzyme catalyses cytidine(2499) in 23S rRNA + S-adenosyl-L-methionine = 5-methylcytidine(2499) in 23S rRNA + S-adenosyl-L-homocysteine + H(+). In terms of biological role, specifically methylates the cytosine at position 2499 (m5C2499) of 23S rRNA. The chain is Ribosomal RNA large subunit methyltransferase DR_0049 from Deinococcus radiodurans (strain ATCC 13939 / DSM 20539 / JCM 16871 / CCUG 27074 / LMG 4051 / NBRC 15346 / NCIMB 9279 / VKM B-1422 / R1).